Here is a 34-residue protein sequence, read N- to C-terminus: Mu-conotoxin GS (34 aa).

Disulfide bonds link Cys-2/Cys-14, Cys-9/Cys-19, and Cys-13/Cys-27. 2 positions are modified to 4-hydroxyproline: Pro-10 and Pro-11. Glu-32 carries the 4-carboxyglutamate modification.

As to expression, expressed by the venom duct.

The protein localises to the secreted. Mu-conotoxins block voltage-gated sodium channels (Nav). No effect was observed upon injections into mice and goldfish (25 ug). This Conus geographus (Geography cone) protein is Mu-conotoxin GS.